The sequence spans 677 residues: UPF0652 protein (677 aa).

A B box-type; atypical zinc finger spans residues 38–84 (ETPGMCCECTDQPAEVVCLQCQDELCTVCSTSLHRRGSRRSHIFKNK). The Zn(2+) site is built by C43, C46, C66, and H71. Residues 91 to 111 (YDELNKRDRQPPLHGKEDEKV) are compositionally biased toward basic and acidic residues. Disordered regions lie at residues 91–142 (YDEL…NNNI) and 156–192 (LNPLPFHHTNQQRNGGGSNNHQINNHHKDEDEEIDED). Over residues 113–126 (NNNNNNNNTNNTNN) the composition is skewed to low complexity. Polar residues predominate over residues 163-178 (HTNQQRNGGGSNNHQI).

It belongs to the UPF0652 family.

This is UPF0652 protein from Dictyostelium discoideum (Social amoeba).